Reading from the N-terminus, the 128-residue chain is Protein BEX2 (128 aa).

Residues 1–44 (MMPKEEQVLKNLTMENANEENEKKDEKEQDANKGEPLALSLGAG) are disordered. A compositionally biased stretch (basic and acidic residues) spans 20–33 (ENEKKDEKEQDANK). Arginine 50 is subject to Omega-N-methylarginine. The interval 103–128 (QLSHSLRAVSTDPPHHEHNDEFCLMP) is disordered. Basic and acidic residues predominate over residues 115-128 (PPHHEHNDEFCLMP). The interval 117–121 (HHEHN) is his cluster. Cysteine 125 provides a ligand contact to Zn(2+).

It belongs to the BEX family. Interacts with LMO2, possibly leading to regulate the transcriptional activity of a DNA-binding complex containing LMO2. Interacts with OMP.

Its subcellular location is the cytoplasm. It localises to the nucleus. In terms of biological role, regulator of mitochondrial apoptosis and G1 cell cycle. Regulates the level of PP2A regulatory subunit B and PP2A phosphatase activity. In absence of reductive stress, acts as a pseudosubstrate for the CRL2(FEM1B) complex: associates with FEM1B via zinc, thereby preventing association between FEM1B and its substrates. In Bos taurus (Bovine), this protein is Protein BEX2 (BEX2).